The following is a 176-amino-acid chain: SLSHEKFFSLGSGPGRALAGREELYKELGYKDSADAAVLVLESDKVPPQEVVEKVARDTGVKAENLTFILTPTRSLAGTVQIVARVLEVALHKIHTLHFPLEHVVDGMASAPLPPPAPDFLIGMGRTNDAILFGGHAHIFVKGSDEAAAKLAKELPSSASRDYGRPFAEVFKAVNM.

The protein belongs to the MCH family.

It localises to the cytoplasm. The enzyme catalyses 5,10-methenyl-5,6,7,8-tetrahydromethanopterin + H2O = N(5)-formyl-5,6,7,8-tetrahydromethanopterin + H(+). The protein operates within one-carbon metabolism; formaldehyde degradation; formate from formaldehyde (H(4)MPT route): step 3/5. Functionally, catalyzes the hydrolysis of methenyl-H(4)MPT(+) to 5-formyl-H(4)MPT. The sequence is that of Methenyltetrahydromethanopterin cyclohydrolase (mch) from Methylophilus methylotrophus (Bacterium W3A1).